Here is a 723-residue protein sequence, read N- to C-terminus: Fatty acid oxidation complex subunit alpha (723 aa).

Residues 1–189 (MIYQAETLQV…KIGLLDAVVD (189 aa)) form an enoyl-CoA hydratase/isomerase region. Asp296 serves as a coordination point for substrate. The tract at residues 311 to 723 (NKETQRAAVL…FYGAQQQGSI (413 aa)) is 3-hydroxyacyl-CoA dehydrogenase. NAD(+) is bound by residues Met325, Asp344, 401–403 (VVE), Lys408, and Ser430. The active-site For 3-hydroxyacyl-CoA dehydrogenase activity is the His451. Asn454 is an NAD(+) binding site. 2 residues coordinate substrate: Asn501 and Tyr661.

This sequence in the N-terminal section; belongs to the enoyl-CoA hydratase/isomerase family. It in the C-terminal section; belongs to the 3-hydroxyacyl-CoA dehydrogenase family. As to quaternary structure, heterotetramer of two alpha chains (FadB) and two beta chains (FadA).

The enzyme catalyses a (3S)-3-hydroxyacyl-CoA + NAD(+) = a 3-oxoacyl-CoA + NADH + H(+). It carries out the reaction a (3S)-3-hydroxyacyl-CoA = a (2E)-enoyl-CoA + H2O. The catalysed reaction is a 4-saturated-(3S)-3-hydroxyacyl-CoA = a (3E)-enoyl-CoA + H2O. It catalyses the reaction (3S)-3-hydroxybutanoyl-CoA = (3R)-3-hydroxybutanoyl-CoA. The enzyme catalyses a (3Z)-enoyl-CoA = a 4-saturated (2E)-enoyl-CoA. It carries out the reaction a (3E)-enoyl-CoA = a 4-saturated (2E)-enoyl-CoA. The protein operates within lipid metabolism; fatty acid beta-oxidation. Functionally, involved in the aerobic and anaerobic degradation of long-chain fatty acids via beta-oxidation cycle. Catalyzes the formation of 3-oxoacyl-CoA from enoyl-CoA via L-3-hydroxyacyl-CoA. It can also use D-3-hydroxyacyl-CoA and cis-3-enoyl-CoA as substrate. The sequence is that of Fatty acid oxidation complex subunit alpha from Vibrio vulnificus (strain CMCP6).